The following is an 804-amino-acid chain: G-type lectin S-receptor-like serine/threonine-protein kinase At1g61500 (804 aa).

The first 24 residues, 1–24, serve as a signal peptide directing secretion; that stretch reads MMTRFACLHLFTMFLFTLLSGSSS. Positions 25–145 constitute a Bulb-type lectin domain; the sequence is AVITTESPLS…VSERALWQSF (121 aa). Topologically, residues 25–427 are extracellular; it reads AVITTESPLS…ELDGNKRKKT (403 aa). Residues N54, N135, and N237 are each glycosylated (N-linked (GlcNAc...) asparagine). Residues 279–315 enclose the EGF-like; atypical domain; it reads PKKLCDFYGACGPFGLCVMSPSPMCKCFRGFVPKSVE. Intrachain disulfides connect C283–C295 and C289–C303. Residues N321, N337, and N376 are each glycosylated (N-linked (GlcNAc...) asparagine). A PAN domain is found at 334 to 416; sequence CLGNSTGEDA…GELLSIRLAR (83 aa). Intrachain disulfides connect C369–C390 and C373–C379. Residues 428 to 448 traverse the membrane as a helical segment; it reads IVASIVSLTLFMILGFTAFGV. The Cytoplasmic segment spans residues 449–804; it reads WRCRVEHIAH…GMTQSVILGR (356 aa). The region spanning 491 to 776 is the Protein kinase domain; the sequence is FSLSNKLGQG…DLPSPKQPTF (286 aa). Residues 497–505 and K519 each bind ATP; that span reads LGQGGFGSV. 2 positions are modified to phosphoserine: S525 and S540. Positions 580–597 are caM-binding; sequence RKRLEIDWPKRFDIIQGI. The Proton acceptor role is filled by D616. S620 and S633 each carry phosphoserine. At T650 the chain carries Phosphothreonine. 2 positions are modified to phosphoserine: S693 and S787.

This sequence belongs to the protein kinase superfamily. Ser/Thr protein kinase family.

The protein resides in the cell membrane. The enzyme catalyses L-seryl-[protein] + ATP = O-phospho-L-seryl-[protein] + ADP + H(+). It catalyses the reaction L-threonyl-[protein] + ATP = O-phospho-L-threonyl-[protein] + ADP + H(+). This is G-type lectin S-receptor-like serine/threonine-protein kinase At1g61500 from Arabidopsis thaliana (Mouse-ear cress).